The sequence spans 466 residues: Histidine--tRNA ligase (466 aa).

It belongs to the class-II aminoacyl-tRNA synthetase family. As to quaternary structure, homodimer.

It is found in the cytoplasm. The enzyme catalyses tRNA(His) + L-histidine + ATP = L-histidyl-tRNA(His) + AMP + diphosphate + H(+). The sequence is that of Histidine--tRNA ligase (hisS) from Bifidobacterium longum (strain NCC 2705).